The following is a 192-amino-acid chain: Transmembrane protein 276 (192 aa).

The N-terminal stretch at 1-32 is a signal peptide; it reads MAPKPGAEWSTALSHLVLGVVSLHAAVSTAEA. 4 consecutive transmembrane segments (helical) span residues 35–55, 63–83, 89–109, and 114–134; these read GAAA…APGL, AGAW…FHWV, SANL…HLGP, and VAGQ…AVFT.

Its subcellular location is the membrane. This chain is Transmembrane protein 276, found in Homo sapiens (Human).